Here is a 405-residue protein sequence, read N- to C-terminus: Deoxyguanosinetriphosphate triphosphohydrolase-like protein (405 aa).

The 145-residue stretch at 75 to 219 (RLTHTIEVAQ…AAIADDIAYN (145 aa)) folds into the HD domain.

It belongs to the dGTPase family. Type 2 subfamily.

This is Deoxyguanosinetriphosphate triphosphohydrolase-like protein from Agrobacterium fabrum (strain C58 / ATCC 33970) (Agrobacterium tumefaciens (strain C58)).